A 250-amino-acid chain; its full sequence is ATP synthase subunit a (250 aa).

6 helical membrane passes run 29-49 (ASLFMVASAVLSAGFLYFATS), 84-104 (FFPLVFSLFMFVLTANLLGMV), 114-134 (IIVTFALALLVILTVILYGFI), 143-163 (LFVPQGVPGILLPLVVIIEII), 185-205 (ITLKVFAGFVASLGTLGALGI), and 208-228 (AILPLIMTVALTGLEFLVAFL).

The protein belongs to the ATPase A chain family. F-type ATPases have 2 components, CF(1) - the catalytic core - and CF(0) - the membrane proton channel. CF(1) has five subunits: alpha(3), beta(3), gamma(1), delta(1), epsilon(1). CF(0) has three main subunits: a(1), b(2) and c(9-12). The alpha and beta chains form an alternating ring which encloses part of the gamma chain. CF(1) is attached to CF(0) by a central stalk formed by the gamma and epsilon chains, while a peripheral stalk is formed by the delta and b chains.

It localises to the cell inner membrane. Functionally, key component of the proton channel; it plays a direct role in the translocation of protons across the membrane. The chain is ATP synthase subunit a from Rhizobium rhizogenes (strain K84 / ATCC BAA-868) (Agrobacterium radiobacter).